The following is a 98-amino-acid chain: Large ribosomal subunit protein uL23 (98 aa).

This sequence belongs to the universal ribosomal protein uL23 family. Part of the 50S ribosomal subunit. Contacts protein L29, and trigger factor when it is bound to the ribosome.

One of the early assembly proteins it binds 23S rRNA. One of the proteins that surrounds the polypeptide exit tunnel on the outside of the ribosome. Forms the main docking site for trigger factor binding to the ribosome. This chain is Large ribosomal subunit protein uL23, found in Sorangium cellulosum (strain So ce56) (Polyangium cellulosum (strain So ce56)).